Reading from the N-terminus, the 124-residue chain is Ribonuclease pancreatic A (124 aa).

Positions 1–24 (AESSAMKFERQHVDSGGSSSSNAN) are disordered. Substrate-binding residues include Lys-7 and Arg-10. The active-site Proton acceptor is the His-12. Disulfide bonds link Cys-26/Cys-84, Cys-40/Cys-95, Cys-58/Cys-110, and Cys-65/Cys-72. Substrate-binding positions include 41–45 (KPVNT), Lys-66, and Arg-85. His-119 serves as the catalytic Proton donor.

This sequence belongs to the pancreatic ribonuclease family. As to expression, pancreas.

It is found in the secreted. The catalysed reaction is an [RNA] containing cytidine + H2O = an [RNA]-3'-cytidine-3'-phosphate + a 5'-hydroxy-ribonucleotide-3'-[RNA].. It catalyses the reaction an [RNA] containing uridine + H2O = an [RNA]-3'-uridine-3'-phosphate + a 5'-hydroxy-ribonucleotide-3'-[RNA].. In Cavia porcellus (Guinea pig), this protein is Ribonuclease pancreatic A.